The sequence spans 923 residues: Alanine--tRNA ligase (923 aa).

4 residues coordinate Zn(2+): His614, His618, Cys717, and His721. Residues 884–903 (KVGGGGGGPPDFAQGGGPDA) form a disordered region. Gly residues predominate over residues 885 to 901 (VGGGGGGPPDFAQGGGP).

This sequence belongs to the class-II aminoacyl-tRNA synthetase family. Zn(2+) is required as a cofactor.

The protein resides in the cytoplasm. It carries out the reaction tRNA(Ala) + L-alanine + ATP = L-alanyl-tRNA(Ala) + AMP + diphosphate. Functionally, catalyzes the attachment of alanine to tRNA(Ala) in a two-step reaction: alanine is first activated by ATP to form Ala-AMP and then transferred to the acceptor end of tRNA(Ala). Also edits incorrectly charged Ser-tRNA(Ala) and Gly-tRNA(Ala) via its editing domain. The protein is Alanine--tRNA ligase of Haloquadratum walsbyi (strain DSM 16790 / HBSQ001).